Here is a 233-residue protein sequence, read N- to C-terminus: Phosphatidylserine decarboxylase proenzyme (233 aa).

The active-site Schiff-base intermediate with substrate; via pyruvic acid is the Ser-188. At Ser-188 the chain carries Pyruvic acid (Ser); by autocatalysis.

Belongs to the phosphatidylserine decarboxylase family. PSD-A subfamily. Heterodimer of a large membrane-associated beta subunit and a small pyruvoyl-containing alpha subunit. The cofactor is pyruvate. In terms of processing, is synthesized initially as an inactive proenzyme. Formation of the active enzyme involves a self-maturation process in which the active site pyruvoyl group is generated from an internal serine residue via an autocatalytic post-translational modification. Two non-identical subunits are generated from the proenzyme in this reaction, and the pyruvate is formed at the N-terminus of the alpha chain, which is derived from the carboxyl end of the proenzyme. The post-translation cleavage follows an unusual pathway, termed non-hydrolytic serinolysis, in which the side chain hydroxyl group of the serine supplies its oxygen atom to form the C-terminus of the beta chain, while the remainder of the serine residue undergoes an oxidative deamination to produce ammonia and the pyruvoyl prosthetic group on the alpha chain.

It is found in the cell membrane. The enzyme catalyses a 1,2-diacyl-sn-glycero-3-phospho-L-serine + H(+) = a 1,2-diacyl-sn-glycero-3-phosphoethanolamine + CO2. The protein operates within phospholipid metabolism; phosphatidylethanolamine biosynthesis; phosphatidylethanolamine from CDP-diacylglycerol: step 2/2. Catalyzes the formation of phosphatidylethanolamine (PtdEtn) from phosphatidylserine (PtdSer). This Ruegeria sp. (strain TM1040) (Silicibacter sp.) protein is Phosphatidylserine decarboxylase proenzyme.